The sequence spans 216 residues: Large ribosomal subunit protein uL3 (216 aa).

Q157 is modified (N5-methylglutamine).

Belongs to the universal ribosomal protein uL3 family. In terms of assembly, part of the 50S ribosomal subunit. Forms a cluster with proteins L14 and L19. Post-translationally, methylated by PrmB.

In terms of biological role, one of the primary rRNA binding proteins, it binds directly near the 3'-end of the 23S rRNA, where it nucleates assembly of the 50S subunit. This Xanthomonas axonopodis pv. citri (strain 306) protein is Large ribosomal subunit protein uL3.